We begin with the raw amino-acid sequence, 352 residues long: DNA integrity scanning protein DisA (352 aa).

Residues 3-143 enclose the DAC domain; the sequence is DERIVLALKS…FKYSLSEVSV (141 aa). ATP-binding positions include G70, L88, and 101-105; that span reads IRHRT.

The protein belongs to the DisA family. Homooctamer. Mg(2+) serves as cofactor.

The catalysed reaction is 2 ATP = 3',3'-c-di-AMP + 2 diphosphate. Participates in a DNA-damage check-point that is active prior to asymmetric division when DNA is damaged. DisA forms globular foci that rapidly scan along the chromosomes during sporulation, searching for lesions. When a lesion is present, DisA pauses at the lesion site. This triggers a cellular response that culminates in a temporary block in sporulation initiation. Functionally, also has diadenylate cyclase activity, catalyzing the condensation of 2 ATP molecules into cyclic di-AMP (c-di-AMP). c-di-AMP acts as a signaling molecule that couples DNA integrity with progression of sporulation. The rise in c-di-AMP level generated by DisA while scanning the chromosome, operates as a positive signal that advances sporulation; upon encountering a lesion, the DisA focus arrests at the damaged site and halts c-di-AMP synthesis. This chain is DNA integrity scanning protein DisA, found in Carboxydothermus hydrogenoformans (strain ATCC BAA-161 / DSM 6008 / Z-2901).